Here is a 165-residue protein sequence, read N- to C-terminus: Bark lectin isoform 2 (165 aa).

Residues Asn27 and Asn57 are each glycosylated (N-linked (GlcNAc...) asparagine). 2 cysteine pairs are disulfide-bonded: Cys33–Cys80 and Cys126–Cys133.

This sequence belongs to the protease inhibitor I3 (leguminous Kunitz-type inhibitor) family. As to quaternary structure, dimer.

In terms of biological role, glucose and N-acetylglucosamine binding lectin. Has hemagglutinating activity against human and rabbit erythrocytes which does not require divalent cations. Inhibits factor Xa and, to a lesser extent, trypsin. Does not inhibit neutrophil elastase, human plasma kallikrein, papain, human plasmin, porcine pancreatic kallikrein and bovin chymotrypsin. Has insecticidal activity against the termite species N.corniger. Induces apoptosis in prostrate cancer cell lines DU145 and PC3. This Crateva tapia (Garlic-pear tree) protein is Bark lectin isoform 2.